Reading from the N-terminus, the 843-residue chain is MGPQARTLCLLSLLLHVLPKPGKLVENSDFHLAGDYLLGGLFTLHANVKSISHLSYLQVPKCNEFTMKVLGYNLMQAMRFAVEEINNCSSLLPGVLLGYEMVDVCYLSNNIHPGLYFLAQDDDLLPILKDYSQYMPHVVAVIGPDNSESAITVSNILSHFLIPQITYSAISDKLRDKRHFPSMLRTVPSATHHIEAMVQLMVHFQWNWIVVLVSDDDYGRENSHLLSQRLTKTSDICIAFQEVLPIPESSQVMRSEEQRQLDNILDKLRRTSARVVVVFSPELSLYSFFHEVLRWNFTGFVWIASESWAIDPVLHNLTELRHTGTFLGVTIQRVSIPGFSQFRVRRDKPGYPVPNTTNLRTTCNQDCDACLNTTKSFNNILILSGERVVYSVYSAVYAVAHALHRLLGCNRVRCTKQKVYPWQLLREIWHVNFTLLGNRLFFDQQGDMPMLLDIIQWQWDLSQNPFQSIASYSPTSKRLTYINNVSWYTPNNTVPVSMCSKSCQPGQMKKSVGLHPCCFECLDCMPGTYLNRSADEFNCLSCPGSMWSYKNDITCFQRRPTFLEWHEVPTIVVAILAALGFFSTLAILFIFWRHFQTPMVRSAGGPMCFLMLVPLLLAFGMVPVYVGPPTVFSCFCRQAFFTVCFSICLSCITVRSFQIVCVFKMARRLPSAYSFWMRYHGPYVFVAFITAIKVALVVGNMLATTINPIGRTDPDDPNIMILSCHPNYRNGLLFNTSMDLLLSVLGFSFAYMGKELPTNYNEAKFITLSMTFSFTSSISLCTFMSVHDGVLVTIMDLLVTVLNFLAIGLGYFGPKCYMILFYPERNTSAYFNSMIQGYTMRKS.

The first 19 residues, 1 to 19 (MGPQARTLCLLSLLLHVLP), serve as a signal peptide directing secretion. Residues 20–570 (KPGKLVENSD…TFLEWHEVPT (551 aa)) lie on the Extracellular side of the membrane. N87, N296, N316, N355, N372, N432, N484, N491, and N531 each carry an N-linked (GlcNAc...) asparagine glycan. A helical transmembrane segment spans residues 571–591 (IVVAILAALGFFSTLAILFIF). At 592-606 (WRHFQTPMVRSAGGP) the chain is on the cytoplasmic side. A helical transmembrane segment spans residues 607–627 (MCFLMLVPLLLAFGMVPVYVG). The Extracellular segment spans residues 628–642 (PPTVFSCFCRQAFFT). The chain crosses the membrane as a helical span at residues 643–663 (VCFSICLSCITVRSFQIVCVF). Residues 664–682 (KMARRLPSAYSFWMRYHGP) lie on the Cytoplasmic side of the membrane. Residues 683-703 (YVFVAFITAIKVALVVGNMLA) traverse the membrane as a helical segment. At 704-731 (TTINPIGRTDPDDPNIMILSCHPNYRNG) the chain is on the extracellular side. A helical transmembrane segment spans residues 732–752 (LLFNTSMDLLLSVLGFSFAYM). The Cytoplasmic portion of the chain corresponds to 753–764 (GKELPTNYNEAK). A helical membrane pass occupies residues 765 to 785 (FITLSMTFSFTSSISLCTFMS). Over 786-789 (VHDG) the chain is Extracellular. A helical transmembrane segment spans residues 790 to 810 (VLVTIMDLLVTVLNFLAIGLG). Residues 811–843 (YFGPKCYMILFYPERNTSAYFNSMIQGYTMRKS) lie on the Cytoplasmic side of the membrane.

The protein belongs to the G-protein coupled receptor 3 family. TAS1R subfamily. In terms of assembly, forms heterodimers with TAS1R3. As to expression, abundantly expressed in circumvallate and foliate papillae.

It localises to the cell membrane. Functionally, putative taste receptor. TAS1R2/TAS1R3 recognizes diverse natural and synthetic sweeteners. This Rattus norvegicus (Rat) protein is Taste receptor type 1 member 2 (Tas1r2).